Here is a 134-residue protein sequence, read N- to C-terminus: MILACDVGLKRIGIAALLNGVILPLEAILRHNRNQASRDLSDLLREKNIQVLVVGKPNESYADTNARIEHFIKLVDFKGEIVFINEDNSSIEAYENLEHLGRKNKRLATKDGRLDSLSACRILERYCQQVLKKD.

This sequence belongs to the YqgF nuclease family.

It is found in the cytoplasm. Its function is as follows. Could be a nuclease involved in processing of the 5'-end of pre-16S rRNA. This chain is Putative pre-16S rRNA nuclease, found in Helicobacter pylori (strain G27).